We begin with the raw amino-acid sequence, 121 residues long: Small ribosomal subunit protein uS13 (121 aa).

The disordered stretch occupies residues 91-121; the sequence is HRMSLPVRGQRTRTNARTRRGSRKTVAGRKK. Over residues 100 to 121 the composition is skewed to basic residues; sequence QRTRTNARTRRGSRKTVAGRKK.

Belongs to the universal ribosomal protein uS13 family. In terms of assembly, part of the 30S ribosomal subunit. Forms a loose heterodimer with protein S19. Forms two bridges to the 50S subunit in the 70S ribosome.

In terms of biological role, located at the top of the head of the 30S subunit, it contacts several helices of the 16S rRNA. In the 70S ribosome it contacts the 23S rRNA (bridge B1a) and protein L5 of the 50S subunit (bridge B1b), connecting the 2 subunits; these bridges are implicated in subunit movement. Contacts the tRNAs in the A and P-sites. In Prochlorococcus marinus (strain MIT 9312), this protein is Small ribosomal subunit protein uS13.